A 331-amino-acid polypeptide reads, in one-letter code: L-lactate dehydrogenase A chain (331 aa).

Residues 29–57 (GMVG…MEDK) and Arg98 each bind NAD(+). Substrate is bound by residues Arg105, Asn137, and Arg168. Residue Asn137 participates in NAD(+) binding. His192 acts as the Proton acceptor in catalysis. Residue Thr247 participates in substrate binding.

The protein belongs to the LDH/MDH superfamily. LDH family. Homotetramer.

It is found in the cytoplasm. The catalysed reaction is (S)-lactate + NAD(+) = pyruvate + NADH + H(+). It participates in fermentation; pyruvate fermentation to lactate; (S)-lactate from pyruvate: step 1/1. Its function is as follows. Interconverts simultaneously and stereospecifically pyruvate and lactate with concomitant interconversion of NADH and NAD(+). This chain is L-lactate dehydrogenase A chain (ldha), found in Dissostichus eleginoides (Patagonian toothfish).